Consider the following 386-residue polypeptide: ATP synthase gamma chain 2, chloroplastic (386 aa).

The interval 1–22 is disordered; sequence MTGSISTSWLLSSPSNSNSASS. The transit peptide at 1 to 60 directs the protein to the chloroplast; the sequence is MTGSISTSWLLSSPSNSNSASSSESYSFIATLKPVRYYPFQSLTPNRISSRSPLPSIQIR. The active site involves Cys149. Cys260 and Cys266 form a disulfide bridge.

It belongs to the ATPase gamma chain family. As to quaternary structure, F-type ATPases have 2 components, CF(1) - the catalytic core - and CF(0) - the membrane proton channel. CF(1) has five subunits: alpha(3), beta(3), gamma(1), delta(1), epsilon(1). CF(0) has four main subunits: a, b, b' and c.

Its subcellular location is the plastid. It localises to the chloroplast thylakoid membrane. Its function is as follows. Produces ATP from ADP in the presence of a proton gradient across the membrane. The gamma chain is believed to be important in regulating ATPase activity and the flow of protons through the CF(0) complex. The polypeptide is ATP synthase gamma chain 2, chloroplastic (ATPC2) (Arabidopsis thaliana (Mouse-ear cress)).